Here is a 616-residue protein sequence, read N- to C-terminus: Methionine--tRNA ligase, chloroplastic/mitochondrial (616 aa).

The 'HIGH' region motif lies at 78 to 88; sequence YYVNAPPHMGS. A 'KMSKS' region motif is present at residues 366-370; it reads KMGKS. Lys-369 contributes to the ATP binding site. A compositionally biased stretch (basic and acidic residues) spans 582-593; it reads LNPEKEEDEKKP. The tract at residues 582 to 602 is disordered; sequence LNPEKEEDEKKPKVGKKTGKA.

Belongs to the class-I aminoacyl-tRNA synthetase family.

The protein resides in the plastid. Its subcellular location is the chloroplast. The protein localises to the mitochondrion. The catalysed reaction is tRNA(Met) + L-methionine + ATP = L-methionyl-tRNA(Met) + AMP + diphosphate. This Arabidopsis thaliana (Mouse-ear cress) protein is Methionine--tRNA ligase, chloroplastic/mitochondrial.